The chain runs to 527 residues: Probable protein kinase UbiB (527 aa).

Positions 123-527 (EFNETALASA…AIWLLIYLLS (405 aa)) constitute a Protein kinase domain. ATP contacts are provided by residues 129-137 (LASASIAQV) and Lys-161. Catalysis depends on Asp-296, which acts as the Proton acceptor. Residues 506-526 (FTSFILGLCTGLAIWLLIYLL) form a helical membrane-spanning segment.

The protein belongs to the ABC1 family. UbiB subfamily.

Its subcellular location is the cell inner membrane. Its pathway is cofactor biosynthesis; ubiquinone biosynthesis [regulation]. Is probably a protein kinase regulator of UbiI activity which is involved in aerobic coenzyme Q (ubiquinone) biosynthesis. In Pasteurella multocida (strain Pm70), this protein is Probable protein kinase UbiB.